Reading from the N-terminus, the 496-residue chain is MFNTPTPDSENTYDAILVGAGIMSSTLAVLLHELEPDLRLLVVEKLSSAGLESSCAKNNAGTGHAANCELNYTPIQEDGHLSTNKAFEINKSFEQSLEFWASLAEKGKLIPKTFLNKLPHISLVFGDEDISLLKKRFSKLSSHAAFAEMEFTMDHGELKDWVPLIMDGRQHSEKIAATRIKRGTDIDFGNLTRSYINQIEGAKSIDINYSTNVENLQQDSEGDWYLSLEGAKNNRIVRSKFVFLGAGGGALSLLQKSRIPEGLLYAGFPVSGKWLICDEEKSTKTHNAKVYGKAAVGAPPMSVPHLDTRWIDKKKSLLFGPFAGFSSNFLKYGSKLDLFRSIKTTNLFSMLQAGLDNIDLGKYLLNQLIQTNEDRIDTLKRFLPQVSPNDWKLSTAGQRVQIIKQTSKGGVLKMGTEVVTSSDGSLAALLGASPGASTAVTIMIEVLNRCWLEKMKSSKWKNKMLELFPSIGTDINSDQEALLAIRKRNDFLLKLI.

The protein belongs to the MQO family. Requires FAD as cofactor.

The enzyme catalyses (S)-malate + a quinone = a quinol + oxaloacetate. It participates in carbohydrate metabolism; tricarboxylic acid cycle; oxaloacetate from (S)-malate (quinone route): step 1/1. The chain is Probable malate:quinone oxidoreductase from Prochlorococcus marinus (strain NATL1A).